Consider the following 466-residue polypeptide: 3-isopropylmalate dehydratase large subunit (466 aa).

[4Fe-4S] cluster contacts are provided by Cys-347, Cys-407, and Cys-410.

This sequence belongs to the aconitase/IPM isomerase family. LeuC type 1 subfamily. Heterodimer of LeuC and LeuD. [4Fe-4S] cluster serves as cofactor.

The enzyme catalyses (2R,3S)-3-isopropylmalate = (2S)-2-isopropylmalate. The protein operates within amino-acid biosynthesis; L-leucine biosynthesis; L-leucine from 3-methyl-2-oxobutanoate: step 2/4. Catalyzes the isomerization between 2-isopropylmalate and 3-isopropylmalate, via the formation of 2-isopropylmaleate. The chain is 3-isopropylmalate dehydratase large subunit from Escherichia coli O17:K52:H18 (strain UMN026 / ExPEC).